Consider the following 87-residue polypeptide: Small ribosomal subunit protein bS18 (87 aa).

Belongs to the bacterial ribosomal protein bS18 family. As to quaternary structure, part of the 30S ribosomal subunit. Forms a tight heterodimer with protein bS6.

Its function is as follows. Binds as a heterodimer with protein bS6 to the central domain of the 16S rRNA, where it helps stabilize the platform of the 30S subunit. In Nitratidesulfovibrio vulgaris (strain DSM 19637 / Miyazaki F) (Desulfovibrio vulgaris), this protein is Small ribosomal subunit protein bS18.